Consider the following 295-residue polypeptide: Cbb3-type cytochrome c oxidase subunit CcoP (295 aa).

Residues 1 to 31 (MAQKEKDALSGVETTGHEWDGLRELNNPLPK) are Cytoplasmic-facing. Residues 32–52 (WWLYIFYVCIAWSLVYYVLYP) form a helical membrane-spanning segment. Over 53 to 295 (AWPLGKSYTK…VYVHNLGGGK (243 aa)) the chain is Periplasmic. Cytochrome c domains follow at residues 108 to 200 (FAMA…LSLN) and 207 to 292 (AAAE…HNLG). Heme c contacts are provided by Cys-121, Cys-124, His-125, Met-175, Cys-220, Cys-223, His-224, and Met-269.

It belongs to the CcoP / FixP family. As to quaternary structure, component of the cbb3-type cytochrome c oxidase at least composed of CcoN, CcoO, CcoQ and CcoP. The cofactor is heme c.

The protein localises to the cell inner membrane. Its pathway is energy metabolism; oxidative phosphorylation. In terms of biological role, C-type cytochrome. Part of the cbb3-type cytochrome c oxidase complex. CcoP subunit is required for transferring electrons from donor cytochrome c via its heme groups to CcoO subunit. From there, electrons are shuttled to the catalytic binuclear center of CcoN subunit where oxygen reduction takes place. The complex also functions as a proton pump. The protein is Cbb3-type cytochrome c oxidase subunit CcoP of Azospirillum brasilense.